The following is a 189-amino-acid chain: ATP synthase subunit b (189 aa).

The chain crosses the membrane as a helical span at residues 23–43; it reads IEIVLSLVVFGLLLFAVWKFV.

This sequence belongs to the ATPase B chain family. As to quaternary structure, F-type ATPases have 2 components, F(1) - the catalytic core - and F(0) - the membrane proton channel. F(1) has five subunits: alpha(3), beta(3), gamma(1), delta(1), epsilon(1). F(0) has three main subunits: a(1), b(2) and c(10-14). The alpha and beta chains form an alternating ring which encloses part of the gamma chain. F(1) is attached to F(0) by a central stalk formed by the gamma and epsilon chains, while a peripheral stalk is formed by the delta and b chains.

The protein resides in the cell membrane. F(1)F(0) ATP synthase produces ATP from ADP in the presence of a proton or sodium gradient. F-type ATPases consist of two structural domains, F(1) containing the extramembraneous catalytic core and F(0) containing the membrane proton channel, linked together by a central stalk and a peripheral stalk. During catalysis, ATP synthesis in the catalytic domain of F(1) is coupled via a rotary mechanism of the central stalk subunits to proton translocation. Functionally, component of the F(0) channel, it forms part of the peripheral stalk, linking F(1) to F(0). The chain is ATP synthase subunit b from Nocardioides sp. (strain ATCC BAA-499 / JS614).